Consider the following 241-residue polypeptide: Small ribosomal subunit protein uS2 (241 aa).

This sequence belongs to the universal ribosomal protein uS2 family.

The protein is Small ribosomal subunit protein uS2 of Yersinia enterocolitica serotype O:8 / biotype 1B (strain NCTC 13174 / 8081).